Reading from the N-terminus, the 119-residue chain is NADH-quinone oxidoreductase subunit A (119 aa).

The next 3 helical transmembrane spans lie at valine 9–valine 29, leucine 63–valine 83, and valine 88–valine 108.

The protein belongs to the complex I subunit 3 family. As to quaternary structure, NDH-1 is composed of 14 different subunits. Subunits NuoA, H, J, K, L, M, N constitute the membrane sector of the complex.

The protein localises to the cell inner membrane. The catalysed reaction is a quinone + NADH + 5 H(+)(in) = a quinol + NAD(+) + 4 H(+)(out). In terms of biological role, NDH-1 shuttles electrons from NADH, via FMN and iron-sulfur (Fe-S) centers, to quinones in the respiratory chain. The immediate electron acceptor for the enzyme in this species is believed to be ubiquinone. Couples the redox reaction to proton translocation (for every two electrons transferred, four hydrogen ions are translocated across the cytoplasmic membrane), and thus conserves the redox energy in a proton gradient. This chain is NADH-quinone oxidoreductase subunit A, found in Delftia acidovorans (strain DSM 14801 / SPH-1).